We begin with the raw amino-acid sequence, 115 residues long: Large ribosomal subunit protein bL20 (115 aa).

The protein belongs to the bacterial ribosomal protein bL20 family.

Functionally, binds directly to 23S ribosomal RNA and is necessary for the in vitro assembly process of the 50S ribosomal subunit. It is not involved in the protein synthesizing functions of that subunit. This is Large ribosomal subunit protein bL20 from Borrelia duttonii (strain Ly).